The primary structure comprises 70 residues: Conotoxin AbVIC (70 aa).

Positions 1–17 are cleaved as a signal peptide; it reads VLIIAVLFLTACQLTTA. Positions 18–41 are excised as a propeptide; it reads ETSSRGKQKHRALRSTDKNSKLTR. Positions 19 to 41 are disordered; the sequence is TSSRGKQKHRALRSTDKNSKLTR. 3 disulfide bridges follow: C43/C57, C50/C61, and C56/C68.

This sequence belongs to the conotoxin O1 superfamily. In terms of tissue distribution, expressed by the venom duct.

It is found in the secreted. The polypeptide is Conotoxin AbVIC (Conus abbreviatus (Abbreviated cone)).